We begin with the raw amino-acid sequence, 242 residues long: MTKVLTDQRSIRIKGRSFLAVVLSPESPVDQWLERLDDLAARSAGFFLSRPVVLDVSELSLDKAGLKELLAALRERNVGIMGIEGVRPSMIEPGMPPSLKGGKPASDVEVEPVAVAAELPEDKPHASGEVRAVVQSLVINEPVRSGQSIMFPEGDVTVIGSVASGAEIIAGGSVHIYGALRGRAMAGSLGNVSARIFCRKLEAELLAIDGVYKVAEDIDDKLRGQPVQLWLENDTIKAAKLG.

Belongs to the MinC family. In terms of assembly, interacts with MinD and FtsZ.

Functionally, cell division inhibitor that blocks the formation of polar Z ring septums. Rapidly oscillates between the poles of the cell to destabilize FtsZ filaments that have formed before they mature into polar Z rings. Prevents FtsZ polymerization. This is Probable septum site-determining protein MinC from Agrobacterium fabrum (strain C58 / ATCC 33970) (Agrobacterium tumefaciens (strain C58)).